We begin with the raw amino-acid sequence, 152 residues long: Globin, minor (152 aa).

A Globin domain is found at 12–152 (VNNSYHKDLL…ALIAVVQAAL (141 aa)). His104 contributes to the heme b binding site.

Belongs to the globin family.

This chain is Globin, minor, found in Anadara trapezia (Sydney cockle).